The primary structure comprises 303 residues: Protoheme IX farnesyltransferase (303 aa).

The next 9 helical transmembrane spans lie at 25 to 45 (MGLVQGNLIPAFAGAWLAVVM), 54 to 74 (IPQILLMLLGSTLIMGGACAL), 104 to 124 (LLLLSFGMMLVGEICLFLLNI), 125 to 145 (PSGVLGLMGIVGYVSYYSIWS), 151 to 171 (WNTVIGSFPGAVPPLIGWVAI), 179 to 199 (AIALFLVVFCWQPIHFYALAI), 227 to 247 (FIWLIILLPVPLLLINLGVVF), 248 to 268 (VVLATLLNLGWIALGLTTFKK), and 280 to 300 (FIYSLNYLVIFFVLAVIVSLL).

Belongs to the UbiA prenyltransferase family. Protoheme IX farnesyltransferase subfamily. As to quaternary structure, interacts with CtaA.

It localises to the cell membrane. It catalyses the reaction heme b + (2E,6E)-farnesyl diphosphate + H2O = Fe(II)-heme o + diphosphate. The protein operates within porphyrin-containing compound metabolism; heme O biosynthesis; heme O from protoheme: step 1/1. In terms of biological role, converts heme B (protoheme IX) to heme O by substitution of the vinyl group on carbon 2 of heme B porphyrin ring with a hydroxyethyl farnesyl side group. This Staphylococcus aureus (strain bovine RF122 / ET3-1) protein is Protoheme IX farnesyltransferase.